We begin with the raw amino-acid sequence, 103 residues long: c-Myc-binding protein (103 aa).

The protein belongs to the AMY1 family. In terms of assembly, binds via its C-terminal region to the N-terminal region of MYC. Associates with AKAP1/S-AKAP84. Interacts with MYCBPAP. Interacts with CFAP91. As to expression, highly expressed in heart, placenta, pancreas, skeletal muscle and kidney. Also present at low levels in lung.

The protein localises to the cytoplasm. It localises to the nucleus. The protein resides in the mitochondrion. Its function is as follows. May control the transcriptional activity of MYC. Stimulates the activation of E box-dependent transcription by MYC. This Homo sapiens (Human) protein is c-Myc-binding protein.